We begin with the raw amino-acid sequence, 329 residues long: tRNA dimethylallyltransferase (329 aa).

24–31 contacts ATP; sequence GSTGIGKT. 26 to 31 serves as a coordination point for substrate; it reads TGIGKT. The segment at 49–52 is interaction with substrate tRNA; sequence DSMQ.

The protein belongs to the IPP transferase family. Monomer. Mg(2+) serves as cofactor.

The catalysed reaction is adenosine(37) in tRNA + dimethylallyl diphosphate = N(6)-dimethylallyladenosine(37) in tRNA + diphosphate. Its function is as follows. Catalyzes the transfer of a dimethylallyl group onto the adenine at position 37 in tRNAs that read codons beginning with uridine, leading to the formation of N6-(dimethylallyl)adenosine (i(6)A). This Methylacidiphilum infernorum (isolate V4) (Methylokorus infernorum (strain V4)) protein is tRNA dimethylallyltransferase.